The sequence spans 423 residues: MKVDVLLGLQWGDEGKGKVVDVLTPKYDVVARFQGGPNAGHTLEFEGQKYVLRSIPSGIFQGDKVNIIGNGVVLDPALFKAEAEALEASGHPLKERLHISKKAHLILPTHRILDAAYEAAKGDAKVGTTGKGIGPTYTDKVSRNGVRVGDILHNFEQKYGAAKARHEQILKSLNYEYDLTELEKAWMEGIEYLKQFHFVDSEHEVNNYLKDGKSVLCEGAQGTMLDIDFGSYPFVTSSNTVCAGACTGLGVAPNRIGEVFGIFKAYCTRVGAGPFPTELFDETGDKMCTLGHEFGSVTGRKRRCGWIDLVALKYSVMINGVTKLIMMKSDVLDTFDTIKACVAYKVDGEEIDYFPYDITEGVEPVYAELPGWKTDMTKMQSEDEFPEEFNAYLTFLEEQLGVEIKIVSVGPDRAQTIERYTEE.

GTP contacts are provided by residues 12 to 18 and 40 to 42; these read GDEGKGK and GHT. The active-site Proton acceptor is the D13. Mg(2+) contacts are provided by D13 and G40. Residues 13–16, 38–41, T129, R143, Q221, T236, and R300 each bind IMP; these read DEGK and NAGH. Residue H41 is the Proton donor of the active site. A substrate-binding site is contributed by 296-302; it reads SVTGRKR. GTP is bound by residues R302 and 408–410; that span reads SVG.

This sequence belongs to the adenylosuccinate synthetase family. In terms of assembly, homodimer. Mg(2+) serves as cofactor.

The protein localises to the cytoplasm. It carries out the reaction IMP + L-aspartate + GTP = N(6)-(1,2-dicarboxyethyl)-AMP + GDP + phosphate + 2 H(+). The protein operates within purine metabolism; AMP biosynthesis via de novo pathway; AMP from IMP: step 1/2. In terms of biological role, plays an important role in the de novo pathway of purine nucleotide biosynthesis. Catalyzes the first committed step in the biosynthesis of AMP from IMP. The polypeptide is Adenylosuccinate synthetase (Bacteroides thetaiotaomicron (strain ATCC 29148 / DSM 2079 / JCM 5827 / CCUG 10774 / NCTC 10582 / VPI-5482 / E50)).